The sequence spans 347 residues: Very-long-chain 3-oxoacyl-CoA reductase (347 aa).

The helical transmembrane segment at 22–42 (LLWSIFGFGVLKATTLILRIM) threads the bilayer. Residues V68, D122, N149, Y223, K227, V256, and S258 each contribute to the NADP(+) site. The active-site Proton donor is the Y223. The active-site Lowers pKa of active site Tyr is K227.

The protein belongs to the short-chain dehydrogenases/reductases (SDR) family.

The protein localises to the endoplasmic reticulum membrane. The catalysed reaction is a very-long-chain (3R)-3-hydroxyacyl-CoA + NADP(+) = a very-long-chain 3-oxoacyl-CoA + NADPH + H(+). It participates in lipid metabolism; fatty acid biosynthesis. In terms of biological role, component of the microsomal membrane bound fatty acid elongation system, which produces the 26-carbon very long-chain fatty acids (VLCFA) from palmitate. Catalyzes the reduction of the 3-ketoacyl-CoA intermediate that is formed in each cycle of fatty acid elongation. VLCFAs serve as precursors for ceramide and sphingolipids. This is Very-long-chain 3-oxoacyl-CoA reductase from Vanderwaltozyma polyspora (strain ATCC 22028 / DSM 70294 / BCRC 21397 / CBS 2163 / NBRC 10782 / NRRL Y-8283 / UCD 57-17) (Kluyveromyces polysporus).